The chain runs to 239 residues: Lipoprotein-releasing system ATP-binding protein LolD (239 aa).

The 226-residue stretch at 14–239 (IRAERLGKTY…KLRELAPSAV (226 aa)) folds into the ABC transporter domain. Position 50–57 (50–57 (GASGAGKS)) interacts with ATP.

It belongs to the ABC transporter superfamily. Lipoprotein translocase (TC 3.A.1.125) family. As to quaternary structure, the complex is composed of two ATP-binding proteins (LolD) and two transmembrane proteins (LolC and LolE).

Its subcellular location is the cell inner membrane. Functionally, part of the ABC transporter complex LolCDE involved in the translocation of mature outer membrane-directed lipoproteins, from the inner membrane to the periplasmic chaperone, LolA. Responsible for the formation of the LolA-lipoprotein complex in an ATP-dependent manner. This Xanthomonas campestris pv. campestris (strain 8004) protein is Lipoprotein-releasing system ATP-binding protein LolD.